The following is a 406-amino-acid chain: Cysteine desulfurase (406 aa).

Lys-226 is subject to N6-(pyridoxal phosphate)lysine. Cys-364 (cysteine persulfide intermediate) is an active-site residue.

It belongs to the class-V pyridoxal-phosphate-dependent aminotransferase family. Csd subfamily. As to quaternary structure, homodimer. Interacts with SufE and the SufBCD complex composed of SufB, SufC and SufD. The interaction with SufE is required to mediate the direct transfer of the sulfur atom from the S-sulfanylcysteine. Pyridoxal 5'-phosphate is required as a cofactor.

It localises to the cytoplasm. The enzyme catalyses (sulfur carrier)-H + L-cysteine = (sulfur carrier)-SH + L-alanine. It catalyses the reaction L-selenocysteine + AH2 = hydrogenselenide + L-alanine + A + H(+). The protein operates within cofactor biosynthesis; iron-sulfur cluster biosynthesis. In terms of biological role, cysteine desulfurases mobilize the sulfur from L-cysteine to yield L-alanine, an essential step in sulfur metabolism for biosynthesis of a variety of sulfur-containing biomolecules. Component of the suf operon, which is activated and required under specific conditions such as oxidative stress and iron limitation. Acts as a potent selenocysteine lyase in vitro, that mobilizes selenium from L-selenocysteine. Selenocysteine lyase activity is however unsure in vivo. In Escherichia fergusonii (strain ATCC 35469 / DSM 13698 / CCUG 18766 / IAM 14443 / JCM 21226 / LMG 7866 / NBRC 102419 / NCTC 12128 / CDC 0568-73), this protein is Cysteine desulfurase.